The chain runs to 302 residues: Protein FdhE homolog (302 aa).

Belongs to the FdhE family.

Its subcellular location is the cytoplasm. In terms of biological role, necessary for formate dehydrogenase activity. The protein is Protein FdhE homolog of Haemophilus influenzae (strain PittGG).